A 335-amino-acid chain; its full sequence is MDKINAVITGVGGYVPDYVLTNDEISKMVDTTDEWIMGRIGIKERHILNEEGLGTSYMARKAAKQLMQRTKSRPDDIDLVIVATTTSDYRFPSTASILCERLGLKNAFAFDMQAVCSGFLYAMETGANFIRSGKYKKIIIVGADKMSSVIDYTDRATCPIFGDGAAAFMLEPTTEEVGIMDSVLRTDGKGLPFLHIKAGGSVCPPSYYSLDHHLHYIYQEGRTVFKYAVANMSDSCEAIIARNHLTKEEVDWVIPHQANQRIITAVAQRLEVPSEKVMVNIERYGNTSAGTLPLCIWDFEKKLKKGDNLIFTAFGAGFAWGAVYVKWGYDPKEDA.

Catalysis depends on residues C116 and H256. Positions 257–261 (QANQR) are ACP-binding. N286 is an active-site residue.

The protein belongs to the thiolase-like superfamily. FabH family. Homodimer.

Its subcellular location is the cytoplasm. It catalyses the reaction malonyl-[ACP] + acetyl-CoA + H(+) = 3-oxobutanoyl-[ACP] + CO2 + CoA. Its pathway is lipid metabolism; fatty acid biosynthesis. Functionally, catalyzes the condensation reaction of fatty acid synthesis by the addition to an acyl acceptor of two carbons from malonyl-ACP. Catalyzes the first condensation reaction which initiates fatty acid synthesis and may therefore play a role in governing the total rate of fatty acid production. Possesses both acetoacetyl-ACP synthase and acetyl transacylase activities. Its substrate specificity determines the biosynthesis of branched-chain and/or straight-chain of fatty acids. This is Beta-ketoacyl-[acyl-carrier-protein] synthase III 1 from Bacteroides thetaiotaomicron (strain ATCC 29148 / DSM 2079 / JCM 5827 / CCUG 10774 / NCTC 10582 / VPI-5482 / E50).